Here is a 299-residue protein sequence, read N- to C-terminus: Protoheme IX farnesyltransferase (299 aa).

Helical transmembrane passes span 24-44 (VVAL…DQGM), 46-66 (WNAL…AAAI), 94-114 (VHAL…LAWG), 118-138 (LTAW…TLFL), 146-166 (IVLG…SVTG), 172-192 (ALLL…ALAV), 232-252 (LPFI…ALGV), and 278-298 (ITYL…PVTL).

It belongs to the UbiA prenyltransferase family. Protoheme IX farnesyltransferase subfamily.

The protein localises to the cell inner membrane. The enzyme catalyses heme b + (2E,6E)-farnesyl diphosphate + H2O = Fe(II)-heme o + diphosphate. Its pathway is porphyrin-containing compound metabolism; heme O biosynthesis; heme O from protoheme: step 1/1. Converts heme B (protoheme IX) to heme O by substitution of the vinyl group on carbon 2 of heme B porphyrin ring with a hydroxyethyl farnesyl side group. The chain is Protoheme IX farnesyltransferase from Hahella chejuensis (strain KCTC 2396).